A 375-amino-acid chain; its full sequence is Glutamate 5-kinase (375 aa).

An ATP-binding site is contributed by lysine 17. Residues serine 57, aspartate 144, and asparagine 156 each coordinate substrate. Residue 176–177 coordinates ATP; the sequence is TD. Positions 283 to 361 constitute a PUA domain; sequence KGRLWLDTGA…HQIEQILGYV (79 aa).

It belongs to the glutamate 5-kinase family.

The protein resides in the cytoplasm. The enzyme catalyses L-glutamate + ATP = L-glutamyl 5-phosphate + ADP. It participates in amino-acid biosynthesis; L-proline biosynthesis; L-glutamate 5-semialdehyde from L-glutamate: step 1/2. Functionally, catalyzes the transfer of a phosphate group to glutamate to form L-glutamate 5-phosphate. This chain is Glutamate 5-kinase, found in Nitrosococcus oceani (strain ATCC 19707 / BCRC 17464 / JCM 30415 / NCIMB 11848 / C-107).